We begin with the raw amino-acid sequence, 407 residues long: S-adenosylmethionine synthase (407 aa).

An ATP-binding site is contributed by 140 to 145 (GQGSAD).

It belongs to the AdoMet synthase 2 family. The cofactor is Mg(2+).

The enzyme catalyses L-methionine + ATP + H2O = S-adenosyl-L-methionine + phosphate + diphosphate. It functions in the pathway amino-acid biosynthesis; S-adenosyl-L-methionine biosynthesis; S-adenosyl-L-methionine from L-methionine: step 1/1. In terms of biological role, catalyzes the formation of S-adenosylmethionine from methionine and ATP. This chain is S-adenosylmethionine synthase, found in Methanosphaera stadtmanae (strain ATCC 43021 / DSM 3091 / JCM 11832 / MCB-3).